A 101-amino-acid chain; its full sequence is Small ribosomal subunit protein uS14 (101 aa).

The protein belongs to the universal ribosomal protein uS14 family. In terms of assembly, part of the 30S ribosomal subunit. Contacts proteins S3 and S10.

Its function is as follows. Binds 16S rRNA, required for the assembly of 30S particles and may also be responsible for determining the conformation of the 16S rRNA at the A site. The polypeptide is Small ribosomal subunit protein uS14 (Burkholderia lata (strain ATCC 17760 / DSM 23089 / LMG 22485 / NCIMB 9086 / R18194 / 383)).